The primary structure comprises 303 residues: Tyrosine-protein phosphatase 3 (303 aa).

The 269-residue stretch at 24–292 (YMIIEGLNEE…VFLYTVSQEL (269 aa)) folds into the Tyrosine-protein phosphatase domain. The active-site Phosphocysteine intermediate is the Cys-227.

The protein belongs to the protein-tyrosine phosphatase family. Non-receptor class subfamily.

The protein localises to the cytoplasm. It carries out the reaction O-phospho-L-tyrosyl-[protein] + H2O = L-tyrosyl-[protein] + phosphate. In terms of biological role, contributes to dephosphorylation of tyrosine 15 of cdc2. The polypeptide is Tyrosine-protein phosphatase 3 (pyp3) (Schizosaccharomyces pombe (strain 972 / ATCC 24843) (Fission yeast)).